We begin with the raw amino-acid sequence, 364 residues long: Histidinol-phosphate aminotransferase 1 (364 aa).

The residue at position 211 (lysine 211) is an N6-(pyridoxal phosphate)lysine.

The protein belongs to the class-II pyridoxal-phosphate-dependent aminotransferase family. Histidinol-phosphate aminotransferase subfamily. In terms of assembly, homodimer. Pyridoxal 5'-phosphate serves as cofactor.

The enzyme catalyses L-histidinol phosphate + 2-oxoglutarate = 3-(imidazol-4-yl)-2-oxopropyl phosphate + L-glutamate. It functions in the pathway amino-acid biosynthesis; L-histidine biosynthesis; L-histidine from 5-phospho-alpha-D-ribose 1-diphosphate: step 7/9. In Legionella pneumophila subsp. pneumophila (strain Philadelphia 1 / ATCC 33152 / DSM 7513), this protein is Histidinol-phosphate aminotransferase 1.